Here is a 29-residue protein sequence, read N- to C-terminus: Thrombin-like enzyme collinein-2 (29 aa).

Monomer. In terms of tissue distribution, expressed by the venom gland.

The protein localises to the secreted. Thrombin-like snake venom serine protease. This is Thrombin-like enzyme collinein-2 from Crotalus durissus collilineatus (Brazilian rattlesnake).